The sequence spans 117 residues: Large ribosomal subunit protein bL20 (117 aa).

The protein belongs to the bacterial ribosomal protein bL20 family.

Its function is as follows. Binds directly to 23S ribosomal RNA and is necessary for the in vitro assembly process of the 50S ribosomal subunit. It is not involved in the protein synthesizing functions of that subunit. The chain is Large ribosomal subunit protein bL20 from Leptospira borgpetersenii serovar Hardjo-bovis (strain JB197).